The primary structure comprises 606 residues: Probable potassium transport system protein Kup (606 aa).

A run of 12 helical transmembrane segments spans residues 18 to 38, 46 to 66, 97 to 117, 138 to 158, 166 to 186, 212 to 232, 247 to 267, 287 to 307, 339 to 359, 368 to 388, 395 to 415, and 418 to 438; these read GLVFGDIGTSPIYTLTVVFAL, VFGILSLVFWTMTILVTAEYA, LTFVVFLTYLGVSLLMGDGVI, GLHQSWLILIAAIIAVGLFVF, VAGAFGPIMVVWFASLALSGA, GLAGFIVLSEVILCATGGEAL, AWYIVFWALYLNYLGQGAFII, LYIPFLILTILATIIASQAMI, IYIGSVNWMLMIAVVVIMLVF, AYGLAVTGSMSITGIMMILIL, WKAVFAALITVVDLVFFTACL, and LPHGGYWSIILASVPFITILV.

This sequence belongs to the HAK/KUP transporter (TC 2.A.72) family.

Its subcellular location is the cell inner membrane. It carries out the reaction K(+)(in) + H(+)(in) = K(+)(out) + H(+)(out). Functionally, transport of potassium into the cell. Likely operates as a K(+):H(+) symporter. This Trichlorobacter lovleyi (strain ATCC BAA-1151 / DSM 17278 / SZ) (Geobacter lovleyi) protein is Probable potassium transport system protein Kup.